The chain runs to 405 residues: S-adenosylmethionine synthase (405 aa).

Position 141–146 (141–146) interacts with ATP; that stretch reads GQGSVD.

Belongs to the AdoMet synthase 2 family. The cofactor is Mg(2+).

The enzyme catalyses L-methionine + ATP + H2O = S-adenosyl-L-methionine + phosphate + diphosphate. It participates in amino-acid biosynthesis; S-adenosyl-L-methionine biosynthesis; S-adenosyl-L-methionine from L-methionine: step 1/1. Its function is as follows. Catalyzes the formation of S-adenosylmethionine from methionine and ATP. This chain is S-adenosylmethionine synthase, found in Methanococcus maripaludis (Methanococcus deltae).